The following is a 76-amino-acid chain: Acyl carrier protein (76 aa).

Positions 1 to 76 (MSIEERVKKI…SAIDYVQNNQ (76 aa)) constitute a Carrier domain. At S36 the chain carries O-(pantetheine 4'-phosphoryl)serine.

The protein belongs to the acyl carrier protein (ACP) family. Post-translationally, 4'-phosphopantetheine is transferred from CoA to a specific serine of apo-ACP by AcpS. This modification is essential for activity because fatty acids are bound in thioester linkage to the sulfhydryl of the prosthetic group.

The protein localises to the cytoplasm. It participates in lipid metabolism; fatty acid biosynthesis. Carrier of the growing fatty acid chain in fatty acid biosynthesis. The polypeptide is Acyl carrier protein (Mannheimia succiniciproducens (strain KCTC 0769BP / MBEL55E)).